A 940-amino-acid chain; its full sequence is Isoleucine--tRNA ligase (940 aa).

The 'HIGH' region signature appears at 58 to 68; that stretch reads PYANGSIHIGH. Glu564 is a binding site for L-isoleucyl-5'-AMP. Positions 605-609 match the 'KMSKS' region motif; it reads KMSKS. Lys608 is an ATP binding site. Zn(2+) contacts are provided by Cys903, Cys906, Cys923, and Cys926.

This sequence belongs to the class-I aminoacyl-tRNA synthetase family. IleS type 1 subfamily. As to quaternary structure, monomer. It depends on Zn(2+) as a cofactor.

The protein resides in the cytoplasm. The enzyme catalyses tRNA(Ile) + L-isoleucine + ATP = L-isoleucyl-tRNA(Ile) + AMP + diphosphate. Functionally, catalyzes the attachment of isoleucine to tRNA(Ile). As IleRS can inadvertently accommodate and process structurally similar amino acids such as valine, to avoid such errors it has two additional distinct tRNA(Ile)-dependent editing activities. One activity is designated as 'pretransfer' editing and involves the hydrolysis of activated Val-AMP. The other activity is designated 'posttransfer' editing and involves deacylation of mischarged Val-tRNA(Ile). In Shewanella sediminis (strain HAW-EB3), this protein is Isoleucine--tRNA ligase.